The chain runs to 129 residues: Histone H2A.J (129 aa).

The segment at 1–22 (MSGRGKQGGKVRAKAKSRSSRA) is disordered. N6-acetyllysine occurs at positions 6 and 10. The span at 7-19 (QGGKVRAKAKSRS) shows a compositional bias: basic residues. Lys10 is subject to N6-lactoyllysine; alternate. Gln105 carries the post-translational modification N5-methylglutamine. Residue Thr121 is modified to Phosphothreonine; by DCAF1.

This sequence belongs to the histone H2A family. The nucleosome is a histone octamer containing two molecules each of H2A, H2B, H3 and H4 assembled in one H3-H4 heterotetramer and two H2A-H2B heterodimers. The octamer wraps approximately 147 bp of DNA. Monoubiquitination of Lys-120 (H2AXK119ub) gives a specific tag for epigenetic transcriptional repression. Following DNA double-strand breaks (DSBs), it is ubiquitinated through 'Lys-63' linkage of ubiquitin moieties. In terms of processing, glutamine methylation at Gln-105 (H2AQ104me) by FBL is specifically dedicated to polymerase I. It is present at 35S ribosomal DNA locus and impairs binding of the FACT complex. Post-translationally, phosphorylation on Ser-2 (H2AS1ph) is enhanced during mitosis. Phosphorylation on Ser-2 by RPS6KA5/MSK1 directly represses transcription. Acetylation of H3 inhibits Ser-2 phosphorylation by RPS6KA5/MSK1. Phosphorylation at Thr-121 (H2AT120ph) by DCAF1 is present in the regulatory region of many tumor suppresor genes and down-regulates their transcription.

The protein localises to the nucleus. The protein resides in the chromosome. Functionally, core component of nucleosome. Nucleosomes wrap and compact DNA into chromatin, limiting DNA accessibility to the cellular machineries which require DNA as a template. Histones thereby play a central role in transcription regulation, DNA repair, DNA replication and chromosomal stability. DNA accessibility is regulated via a complex set of post-translational modifications of histones, also called histone code, and nucleosome remodeling. The chain is Histone H2A.J from Macaca fascicularis (Crab-eating macaque).